The chain runs to 394 residues: Mitogen-activated protein kinase homolog D5 (394 aa).

A Protein kinase domain is found at 62 to 347; that stretch reads RPPIMPIGKG…VENALAHPYL (286 aa). ATP is bound by residues 68–76 and Lys-91; that span reads IGKGAYGIV. Asp-188 serves as the catalytic Proton acceptor. Position 220 is a phosphothreonine (Thr-220). The TXY signature appears at 220 to 222; that stretch reads TEY. A Phosphotyrosine modification is found at Tyr-222.

Belongs to the protein kinase superfamily. CMGC Ser/Thr protein kinase family. MAP kinase subfamily. Mg(2+) is required as a cofactor. Post-translationally, dually phosphorylated on Thr-220 and Tyr-222, which activates the enzyme. Leaves, roots, root apices, and dormant and growing axillary buds.

The catalysed reaction is L-seryl-[protein] + ATP = O-phospho-L-seryl-[protein] + ADP + H(+). It carries out the reaction L-threonyl-[protein] + ATP = O-phospho-L-threonyl-[protein] + ADP + H(+). Its activity is regulated as follows. Activated by tyrosine and threonine phosphorylation. This chain is Mitogen-activated protein kinase homolog D5, found in Pisum sativum (Garden pea).